Reading from the N-terminus, the 226-residue chain is Cytidylate kinase (226 aa).

12–20 (GPSGAGKGT) serves as a coordination point for ATP.

It belongs to the cytidylate kinase family. Type 1 subfamily.

It is found in the cytoplasm. It catalyses the reaction CMP + ATP = CDP + ADP. The catalysed reaction is dCMP + ATP = dCDP + ADP. This Colwellia psychrerythraea (strain 34H / ATCC BAA-681) (Vibrio psychroerythus) protein is Cytidylate kinase.